Here is a 470-residue protein sequence, read N- to C-terminus: uncharacterized protein (470 aa).

The HTH gntR-type domain maps to 1–69; sequence MTRYQHLATL…PRSGYFVAQR (69 aa). The residue at position 313 (lysine 313) is an N6-(pyridoxal phosphate)lysine.

The protein in the C-terminal section; belongs to the class-I pyridoxal-phosphate-dependent aminotransferase family.

This is an uncharacterized protein from Escherichia coli (strain K12).